Reading from the N-terminus, the 202-residue chain is MEERGTGMGLNPAPSTGPVLAPAPKGILDPSTGKPVGANDPFFLEVNSELSDKGFFVAATDDLITWARTGSLMWMTFGLACCAVEMMQVSMPRYDVERFGFAPRASPRQSDVMIVAGTLTNKMAPALRKVYDQMPEPRYVISMGSCANGGGYYHYSYSVVRGCDRIVPIDIYVPGCPPTAEALLYGVLLLQKKIRRTGTIER.

Residues cysteine 81, cysteine 82, cysteine 146, and cysteine 176 each contribute to the [4Fe-4S] cluster site.

It belongs to the complex I 20 kDa subunit family. NDH-1 is composed of 14 different subunits. Subunits NuoB, C, D, E, F, and G constitute the peripheral sector of the complex. The cofactor is [4Fe-4S] cluster.

It localises to the cell inner membrane. It carries out the reaction a quinone + NADH + 5 H(+)(in) = a quinol + NAD(+) + 4 H(+)(out). Functionally, NDH-1 shuttles electrons from NADH, via FMN and iron-sulfur (Fe-S) centers, to quinones in the respiratory chain. The immediate electron acceptor for the enzyme in this species is believed to be ubiquinone. Couples the redox reaction to proton translocation (for every two electrons transferred, four hydrogen ions are translocated across the cytoplasmic membrane), and thus conserves the redox energy in a proton gradient. In Bradyrhizobium diazoefficiens (strain JCM 10833 / BCRC 13528 / IAM 13628 / NBRC 14792 / USDA 110), this protein is NADH-quinone oxidoreductase subunit B.